The sequence spans 763 residues: Dual specificity tyrosine-phosphorylation-regulated kinase 1A (763 aa).

Phosphoserine is present on Ser-14. Residues 33-56 (QMPHSHQYSDRRQPNISDQQVSAL) form a disordered region. The segment covering 46 to 56 (PNISDQQVSAL) has biased composition (polar residues). A Phosphotyrosine; by autocatalysis modification is found at Tyr-111. Residues 115 to 136 (KKRRHQQGQGDDSSHKKERKVY) form a disordered region. The Bipartite nuclear localization signal signature appears at 117–134 (RRHQQGQGDDSSHKKERK). Tyr-140 is subject to Phosphotyrosine; by autocatalysis. Tyr-145 carries the post-translational modification Phosphotyrosine. The residue at position 159 (Tyr-159) is a Phosphotyrosine; by autocatalysis. The 321-residue stretch at 159 to 479 (YEIDSLIGKG…PYYALQHSFF (321 aa)) folds into the Protein kinase domain. 165 to 173 (IGKGSFGQV) is an ATP binding site. Position 177 is a phosphotyrosine; by autocatalysis (Tyr-177). Lys-188 contacts ATP. The residue at position 219 (Tyr-219) is a Phosphotyrosine; by autocatalysis. 238–241 (FEML) provides a ligand contact to ATP. Residue Asp-287 is the Proton acceptor of the active site. Position 310 is a phosphoserine; by autocatalysis (Ser-310). Phosphotyrosine; by autocatalysis occurs at positions 319 and 321. A Phosphothreonine; by autocatalysis modification is found at Thr-402. Positions 408–442 (TKDGKREYKPPGTRKLHNILGVETGGPGGRRAGES) are disordered. A Phosphotyrosine; by autocatalysis modification is found at Tyr-449. A compositionally biased stretch (polar residues) spans 485-501 (EGTNTSNSVSTSPAMEQ). 3 disordered regions span residues 485–540 (EGTN…HSGG), 596–679 (NALH…GNQA), and 744–763 (DREE…VASS). The segment covering 502–525 (SQSSGTTSSTSSSSGGSSGTSNSG) has biased composition (low complexity). A phosphoserine mark is found at Ser-529 and Ser-538. The interval 595-625 (QNALHHHHGNSSHHHHHHHHHHHHHGQQALG) is histidine-rich domain (HRD). The span at 598–620 (LHHHHGNSSHHHHHHHHHHHHHG) shows a compositional bias: basic residues. The segment covering 634–645 (NSPTNSSSTQDS) has biased composition (polar residues). Over residues 654 to 672 (SMTSLSSSTTSSSTSSSST) the composition is skewed to low complexity. Residues Ser-748 and Ser-758 each carry the phosphoserine modification. Residues 754–763 (CVQQSPVASS) are compositionally biased toward polar residues.

Belongs to the protein kinase superfamily. CMGC Ser/Thr protein kinase family. MNB/DYRK subfamily. As to quaternary structure, interacts with RAD54L2/ARIP4. Interacts with CRY2. Interacts with RANBP9. Interacts with WDR68. Interacts with SIRT1. In terms of processing, can also autophosphorylate on serine and threonine residues (in vitro). Autophosphorylated on numerous tyrosine residues. Detected in brain (at protein level). Ubiquitous.

The protein localises to the nucleus speckle. The enzyme catalyses L-seryl-[protein] + ATP = O-phospho-L-seryl-[protein] + ADP + H(+). The catalysed reaction is L-threonyl-[protein] + ATP = O-phospho-L-threonyl-[protein] + ADP + H(+). It carries out the reaction L-tyrosyl-[protein] + ATP = O-phospho-L-tyrosyl-[protein] + ADP + H(+). It catalyses the reaction [DNA-directed RNA polymerase] + ATP = phospho-[DNA-directed RNA polymerase] + ADP + H(+). With respect to regulation, inhibited by RANBP9. Inhibited by harmine, leucettamine B and leucettine L41. Dual-specificity kinase which possesses both serine/threonine and tyrosine kinase activities. Exhibits a substrate preference for proline at position P+1 and arginine at position P-3. Plays an important role in double-strand breaks (DSBs) repair following DNA damage. Mechanistically, phosphorylates RNF169 and increases its ability to block accumulation of TP53BP1 at the DSB sites thereby promoting homologous recombination repair (HRR). Also acts as a positive regulator of transcription by acting as a CTD kinase that mediates phosphorylation of the CTD (C-terminal domain) of the large subunit of RNA polymerase II (RNAP II) POLR2A. May play a role in a signaling pathway regulating nuclear functions of cell proliferation. Modulates alternative splicing by phosphorylating the splice factor SRSF6. Has pro-survival function and negatively regulates the apoptotic process. Promotes cell survival upon genotoxic stress through phosphorylation of SIRT1. This in turn inhibits p53/TP53 activity and apoptosis. Phosphorylates SEPTIN4, SEPTIN5 and SF3B1 at 'Thr-434'. In Rattus norvegicus (Rat), this protein is Dual specificity tyrosine-phosphorylation-regulated kinase 1A (Dyrk1a).